The sequence spans 350 residues: Dihydroorotate dehydrogenase (quinone) (350 aa).

FMN contacts are provided by residues 59–63 (AGLDK) and threonine 83. Residue lysine 63 participates in substrate binding. 108-112 (NRMGF) contacts substrate. Residues asparagine 136 and asparagine 169 each coordinate FMN. Residue asparagine 169 participates in substrate binding. Serine 172 serves as the catalytic Nucleophile. Asparagine 174 lines the substrate pocket. Positions 214 and 242 each coordinate FMN. 243–244 (NT) provides a ligand contact to substrate. FMN is bound by residues glycine 265, glycine 294, and 315 to 316 (YS).

Belongs to the dihydroorotate dehydrogenase family. Type 2 subfamily. Monomer. The cofactor is FMN.

The protein localises to the cell membrane. It catalyses the reaction (S)-dihydroorotate + a quinone = orotate + a quinol. It participates in pyrimidine metabolism; UMP biosynthesis via de novo pathway; orotate from (S)-dihydroorotate (quinone route): step 1/1. In terms of biological role, catalyzes the conversion of dihydroorotate to orotate with quinone as electron acceptor. In Aromatoleum aromaticum (strain DSM 19018 / LMG 30748 / EbN1) (Azoarcus sp. (strain EbN1)), this protein is Dihydroorotate dehydrogenase (quinone).